A 62-amino-acid polypeptide reads, in one-letter code: Beta-defensin 33 (62 aa).

An N-terminal signal peptide occupies residues methionine 1 to glycine 20. 3 cysteine pairs are disulfide-bonded: cysteine 30-cysteine 59, cysteine 37-cysteine 52, and cysteine 45-cysteine 60.

This sequence belongs to the beta-defensin family.

Its subcellular location is the secreted. Its function is as follows. Has antibacterial activity. The protein is Beta-defensin 33 (Defb33) of Mus musculus (Mouse).